Reading from the N-terminus, the 373-residue chain is Lipoyl synthase (373 aa).

A disordered region spans residues 12-36; it reads HVVSNDHPSSSPLQPGVKQSGEDKI. Cys81, Cys86, Cys92, Cys107, Cys111, Cys114, and Ser323 together coordinate [4Fe-4S] cluster. Positions 93-312 constitute a Radical SAM core domain; it reads FSHGTATFMI…EEYGMALGFS (220 aa). The disordered stretch occupies residues 346 to 373; it reads PAVSSTEHRERHTIASKSASKTESIRHR.

Belongs to the radical SAM superfamily. Lipoyl synthase family. [4Fe-4S] cluster serves as cofactor.

The protein localises to the cytoplasm. It catalyses the reaction [[Fe-S] cluster scaffold protein carrying a second [4Fe-4S](2+) cluster] + N(6)-octanoyl-L-lysyl-[protein] + 2 oxidized [2Fe-2S]-[ferredoxin] + 2 S-adenosyl-L-methionine + 4 H(+) = [[Fe-S] cluster scaffold protein] + N(6)-[(R)-dihydrolipoyl]-L-lysyl-[protein] + 4 Fe(3+) + 2 hydrogen sulfide + 2 5'-deoxyadenosine + 2 L-methionine + 2 reduced [2Fe-2S]-[ferredoxin]. The protein operates within protein modification; protein lipoylation via endogenous pathway; protein N(6)-(lipoyl)lysine from octanoyl-[acyl-carrier-protein]: step 2/2. Functionally, catalyzes the radical-mediated insertion of two sulfur atoms into the C-6 and C-8 positions of the octanoyl moiety bound to the lipoyl domains of lipoate-dependent enzymes, thereby converting the octanoylated domains into lipoylated derivatives. The chain is Lipoyl synthase from Xylella fastidiosa (strain 9a5c).